A 157-amino-acid chain; its full sequence is 2-amino-4-hydroxy-6-hydroxymethyldihydropteridine pyrophosphokinase (157 aa).

It belongs to the HPPK family.

The enzyme catalyses 6-hydroxymethyl-7,8-dihydropterin + ATP = (7,8-dihydropterin-6-yl)methyl diphosphate + AMP + H(+). It participates in cofactor biosynthesis; tetrahydrofolate biosynthesis; 2-amino-4-hydroxy-6-hydroxymethyl-7,8-dihydropteridine diphosphate from 7,8-dihydroneopterin triphosphate: step 4/4. In terms of biological role, catalyzes the transfer of pyrophosphate from adenosine triphosphate (ATP) to 6-hydroxymethyl-7,8-dihydropterin, an enzymatic step in folate biosynthesis pathway. The polypeptide is 2-amino-4-hydroxy-6-hydroxymethyldihydropteridine pyrophosphokinase (folK) (Campylobacter jejuni subsp. jejuni serotype O:2 (strain ATCC 700819 / NCTC 11168)).